Reading from the N-terminus, the 590-residue chain is MSFIFNRETFEDNSFNEVLREKLMRALNLHDRTVGSSSGAMTTGTGAVECSGAAAAGQRPPRSKGGFSKVDILKSGIIVKKVEFPTIPKLEILDLDVSIQSKSLIKGICKVSCRDAMVQITTEIESNLLLLHVNSSPKFTTPKLISNDSFTVPITMTFDKLHLEAITNIFVKNTGVGISFNDVNLDFRLQCSIKLLQSSIEKRLKASMEEVFKDVLPSVIFNMSQRWFTHGETVVPTVDKSMVSSDTPVQPRMILDESDLSDLSPANMLRLSTLVSSRQTLCLNPTAVDTISTIPGCLERQNLHRFNLRFPSLYNYYSNKEQQGAHNNEKNRVEHLKLWGRSSSNPIPTRASFKVENTLPKEVLDSNSYDVRVITAIQTKMYERASNDVVLRRRKIKMRSRKPSKANKDAVSPAQNDSGTSSCSNVASELPHASLQANPQSDEIDPAPEGGPNAEDAYKEELEDSGLRAPQDFPALENVTPVLAQLPNQQRSRLGSPLSAGRPTPLLSPLDDSHWLLQKRDPQDLRTTLYSPIRNGRFYVMPQPQLDTKEASAFLLENGKRFGFVGLLNNHNLKWGNDPPPPYREVSITQ.

One can recognise an SMP-LTD domain in the interval 1-225; sequence MSFIFNRETF…LPSVIFNMSQ (225 aa). Basic residues predominate over residues 393–405; sequence RRKIKMRSRKPSK. A disordered region spans residues 393 to 456; it reads RRKIKMRSRK…APEGGPNAED (64 aa). Positions 413–427 are enriched in polar residues; the sequence is PAQNDSGTSSCSNVA.

It belongs to the MDM34 family. In terms of assembly, component of the ER-mitochondria encounter structure (ERMES) or MDM complex, composed of MMM1, MDM10, MDM12 and MDM34.

Its subcellular location is the mitochondrion outer membrane. In terms of biological role, component of the ERMES/MDM complex, which serves as a molecular tether to connect the endoplasmic reticulum (ER) and mitochondria. Components of this complex are involved in the control of mitochondrial shape and protein biogenesis, and function in nonvesicular lipid trafficking between the ER and mitochondria. MDM34 is required for the interaction of the ER-resident membrane protein MMM1 and the outer mitochondrial membrane-resident beta-barrel protein MDM10. This Eremothecium gossypii (strain ATCC 10895 / CBS 109.51 / FGSC 9923 / NRRL Y-1056) (Yeast) protein is Mitochondrial distribution and morphology protein 34.